A 379-amino-acid polypeptide reads, in one-letter code: F-box/kelch-repeat protein At4g33900 (379 aa).

The F-box domain maps to 9–55 (IKRFLMLPDDLVFNCLARVSRLHYPTLSLVSKKFRFLLASKELYQTR). Kelch repeat units follow at residues 116 to 175 (EIYA…TLDG), 176 to 222 (RIYV…LSIS), and 262 to 308 (SCCV…RNFK).

This Arabidopsis thaliana (Mouse-ear cress) protein is F-box/kelch-repeat protein At4g33900.